We begin with the raw amino-acid sequence, 317 residues long: Acetyl-coenzyme A carboxylase carboxyl transferase subunit alpha (317 aa).

Positions 40–293 (LEVRVREAIV…GDVIASALAE (254 aa)) constitute a CoA carboxyltransferase C-terminal domain.

The protein belongs to the AccA family. In terms of assembly, acetyl-CoA carboxylase is a heterohexamer composed of biotin carboxyl carrier protein (AccB), biotin carboxylase (AccC) and two subunits each of ACCase subunit alpha (AccA) and ACCase subunit beta (AccD).

The protein resides in the cytoplasm. The enzyme catalyses N(6)-carboxybiotinyl-L-lysyl-[protein] + acetyl-CoA = N(6)-biotinyl-L-lysyl-[protein] + malonyl-CoA. It participates in lipid metabolism; malonyl-CoA biosynthesis; malonyl-CoA from acetyl-CoA: step 1/1. Its function is as follows. Component of the acetyl coenzyme A carboxylase (ACC) complex. First, biotin carboxylase catalyzes the carboxylation of biotin on its carrier protein (BCCP) and then the CO(2) group is transferred by the carboxyltransferase to acetyl-CoA to form malonyl-CoA. In Rhizobium johnstonii (strain DSM 114642 / LMG 32736 / 3841) (Rhizobium leguminosarum bv. viciae), this protein is Acetyl-coenzyme A carboxylase carboxyl transferase subunit alpha.